A 223-amino-acid polypeptide reads, in one-letter code: Deoxyribose-phosphate aldolase (223 aa).

Residue Asp92 is the Proton donor/acceptor of the active site. Lys154 (schiff-base intermediate with acetaldehyde) is an active-site residue. Residue Lys182 is the Proton donor/acceptor of the active site.

The protein belongs to the DeoC/FbaB aldolase family. DeoC type 1 subfamily.

It localises to the cytoplasm. It carries out the reaction 2-deoxy-D-ribose 5-phosphate = D-glyceraldehyde 3-phosphate + acetaldehyde. It functions in the pathway carbohydrate degradation; 2-deoxy-D-ribose 1-phosphate degradation; D-glyceraldehyde 3-phosphate and acetaldehyde from 2-deoxy-alpha-D-ribose 1-phosphate: step 2/2. In terms of biological role, catalyzes a reversible aldol reaction between acetaldehyde and D-glyceraldehyde 3-phosphate to generate 2-deoxy-D-ribose 5-phosphate. In Pasteurella multocida (strain Pm70), this protein is Deoxyribose-phosphate aldolase.